Reading from the N-terminus, the 500-residue chain is MNYFPWLTIIVVFPIFAGSLIFFLPHKGNRVIRWYTICICILELLLTTYAFCYHFQSDDPLIQLVEDYKWINFFDFHWRLGIDGLSIGPILLTGFITTLATLAAWPITRDSRLFHFLMLAMYSGQIGSFSSRDLLLFFIMWELELIPVYLLLCMWGGKKRLYSATKFILYTAGGSVFLLMGVLGVALYGSNEPTLNFETSVNQSYPVVLEIIFYIGFFIAFAVKSPIIPLHTWLPDTHGEAHYSTCMLLAGILLKMGAYGLIRINMELLPHAHSIFSPWLMIIGTIQIIYAASTSLGQRNLKKRIAYSSVSHMGFIIIGISSLTDTGLNGALLQIISHGFIGAALFFLAGTTYDRIRLVYLDEMGGIASPMPKMFTMFSSFSMASLALPGMSGFVAELIVFFGIITGQKYLLIPKILITFVMAIGMILTPIYSLSMSRQMFYGYKLFNAPKDSFFDSGPRELFLSISIFLPVIGIGIYPDFVLSLAVDKVEVILSNFFYR.

The next 14 helical transmembrane spans lie at 4-24, 35-55, 87-107, 113-130, 134-154, 167-187, 208-228, 242-262, 272-292, 305-325, 330-350, 386-406, 411-431, and 462-482; these read FPWL…IFFL, YTIC…CYHF, IGPI…AWPI, LFHF…GSFS, LLLF…LLCM, FILY…GVAL, VLEI…SPII, HYST…YGLI, AHSI…IYAA, IAYS…SLTD, GALL…FLAG, LALP…GIIT, LLIP…LTPI, and LFLS…PDFV.

This sequence belongs to the complex I subunit 4 family.

It is found in the plastid. The protein localises to the chloroplast thylakoid membrane. The enzyme catalyses a plastoquinone + NADH + (n+1) H(+)(in) = a plastoquinol + NAD(+) + n H(+)(out). The catalysed reaction is a plastoquinone + NADPH + (n+1) H(+)(in) = a plastoquinol + NADP(+) + n H(+)(out). The protein is NAD(P)H-quinone oxidoreductase chain 4, chloroplastic of Nicotiana tomentosiformis (Tobacco).